A 431-amino-acid polypeptide reads, in one-letter code: Glutamyl-tRNA reductase (431 aa).

Substrate is bound by residues 49–52, S109, 114–116, and Q120; these read TCDR and EPH. The active-site Nucleophile is the C50. 189–194 contributes to the NADP(+) binding site; sequence GTQEMG.

It belongs to the glutamyl-tRNA reductase family. In terms of assembly, homodimer.

It carries out the reaction (S)-4-amino-5-oxopentanoate + tRNA(Glu) + NADP(+) = L-glutamyl-tRNA(Glu) + NADPH + H(+). The protein operates within porphyrin-containing compound metabolism; protoporphyrin-IX biosynthesis; 5-aminolevulinate from L-glutamyl-tRNA(Glu): step 1/2. It participates in porphyrin-containing compound metabolism; chlorophyll biosynthesis. Catalyzes the NADPH-dependent reduction of glutamyl-tRNA(Glu) to glutamate 1-semialdehyde (GSA). This chain is Glutamyl-tRNA reductase, found in Rhodospirillum rubrum (strain ATCC 11170 / ATH 1.1.1 / DSM 467 / LMG 4362 / NCIMB 8255 / S1).